Consider the following 195-residue polypeptide: Ras-related protein Rab-31 (195 aa).

7 residues coordinate GTP: Gly-16, Gly-18, Lys-19, Ser-20, Ser-21, Asp-32, and His-33. Ser-20 lines the Mg(2+) pocket. 2 consecutive short sequence motifs (switch) follow at residues 30 to 42 and 63 to 79; these read HFDHNISPTIGAS and AGQERFHSLAPMYYRGS. Ser-36 carries the phosphoserine modification. Thr-38, Gly-64, Asn-119, Asp-122, Ala-150, and Lys-151 together coordinate GTP. Residue Thr-38 coordinates Mg(2+). S-geranylgeranyl cysteine attachment occurs at residues Cys-194 and Cys-195.

It belongs to the small GTPase superfamily. Rab family. Interacts (in GDP-bound form) with RIN3 and GAPVD1, which function as guanine exchange factors (GEF). Interacts (in GTP-bound form) with EEA1. Interacts with NGFR. Interacts with EGFR. Interacts with OCRL. Interacts (in GTP-bound form) with APPL2; interaction contributes to or enhances recruitment of APPL2 to the phagosomes; interaction enhances Fc-gamma receptor-mediated phagocytosis through PI3K/Akt signaling in macrophages. Mg(2+) serves as cofactor. In terms of tissue distribution, detected in brain astrocytes, spleen and intestine (at protein level).

It localises to the early endosome. The protein resides in the golgi apparatus. The protein localises to the trans-Golgi network. Its subcellular location is the trans-Golgi network membrane. It is found in the cytoplasmic vesicle. It localises to the phagosome. The protein resides in the phagosome membrane. It catalyses the reaction GTP + H2O = GDP + phosphate + H(+). Its activity is regulated as follows. Regulated by guanine nucleotide exchange factors (GEFs) including RIN3 and GAPVD1 which promote the exchange of bound GDP for free GTP. Regulated by GTPase activating proteins (GAPs) which increase the GTP hydrolysis activity. Inhibited by GDP dissociation inhibitors (GDIs) which prevent Rab-GDP dissociation. In terms of biological role, the small GTPases Rab are key regulators of intracellular membrane trafficking, from the formation of transport vesicles to their fusion with membranes. Rabs cycle between an inactive GDP-bound form and an active GTP-bound form that is able to recruit to membranes different set of downstream effectors directly responsible for vesicle formation, movement, tethering and fusion. Required for the integrity and for normal function of the Golgi apparatus and the trans-Golgi network. Plays a role in insulin-stimulated translocation of GLUT4 to the cell membrane. Plays a role in the maturation of phagosomes that engulf pathogens, such as S.aureus and Mycobacterium. Plays a role in M6PR transport from the trans-Golgi network to endosomes. Plays a role in the internalization of EGFR from the cell membrane into endosomes. The chain is Ras-related protein Rab-31 from Rattus norvegicus (Rat).